The chain runs to 623 residues: MMQIDYLLTAIFDPDRGPVLQYQCPENGEASDLHFLAELMLPDRVHERREDWSLFFIHFSKKSNVFSLFSNVDDINFEPSDSNMYYVLNTIRAKRVEGTRRGGSVFAMAICTTFPHVHALKPLLDTAWEIFDSSPSLKTLSMLHKSFNLHNFQSFYQKLSLDSSLILALNNFWSFFNLYLTNSPHIMNDIINKDIDNIPKPGSELIELSRDSYNSQATFCLSAESQERYVTCVIPSIHIPECVGEVSISNLINTFIDGPSPFMNTDISADINPINVLITALLISKKVLFLTKTSSASVLADFVLSSCALVSGATGLLQGLTRITFPYIDLSNVESLVKLPGYLAGVMNPAFTHHADWWDVLCDIDNQTIQVSSNLFSDATTTMDTKSLFNNTSPFTPISKDNQDDEIFIKDLRKFLKADDKETLVRWRVRLYIQSFIRKATSYEALFLESSPLNPYYKDYKFKGFGWSWDNDDEKVNELLYLAPKFEAWRQASTYKDYCYRLHCASTPVLRCMDIQFHLDRLRNSSLSTTDAAEIFLALESHIRTEEDVNYLLSNCPLHSGGLSVIAFGLYHISDKVRKAVSKLLNRIETHKYGKLFYMALNKVDISTHVYINSQHKKKKDSF.

Positions 5–204 (DYLLTAIFDP…IDNIPKPGSE (200 aa)) constitute a uDENN domain. A cDENN domain is found at 248–386 (ISNLINTFID…SDATTTMDTK (139 aa)). In terms of domain architecture, dDENN spans 388–476 (LFNNTSPFTP…WSWDNDDEKV (89 aa)).

It belongs to the AFI1/mesA family.

It is found in the cytoplasm. Its subcellular location is the cell cortex. The protein localises to the nucleus. Functionally, involved in polarity establishment. This is AFI1-like protein C776.06c from Schizosaccharomyces pombe (strain 972 / ATCC 24843) (Fission yeast).